The following is a 388-amino-acid chain: Succinate--CoA ligase [ADP-forming] subunit beta (388 aa).

One can recognise an ATP-grasp domain in the interval 9-244 (KQLFAEYGLP…PSQDDPREAH (236 aa)). Residues Lys46, 53-55 (GRG), Glu99, Thr102, and Glu107 contribute to the ATP site. Residues Asn199 and Asp213 each contribute to the Mg(2+) site. Residues Asn264 and 321–323 (GIV) each bind substrate.

The protein belongs to the succinate/malate CoA ligase beta subunit family. Heterotetramer of two alpha and two beta subunits. Requires Mg(2+) as cofactor.

It carries out the reaction succinate + ATP + CoA = succinyl-CoA + ADP + phosphate. The enzyme catalyses GTP + succinate + CoA = succinyl-CoA + GDP + phosphate. It functions in the pathway carbohydrate metabolism; tricarboxylic acid cycle; succinate from succinyl-CoA (ligase route): step 1/1. Its function is as follows. Succinyl-CoA synthetase functions in the citric acid cycle (TCA), coupling the hydrolysis of succinyl-CoA to the synthesis of either ATP or GTP and thus represents the only step of substrate-level phosphorylation in the TCA. The beta subunit provides nucleotide specificity of the enzyme and binds the substrate succinate, while the binding sites for coenzyme A and phosphate are found in the alpha subunit. The sequence is that of Succinate--CoA ligase [ADP-forming] subunit beta from Pseudomonas fluorescens (strain SBW25).